A 445-amino-acid polypeptide reads, in one-letter code: Glutamate-1-semialdehyde 2,1-aminomutase (445 aa).

The residue at position 263 (lysine 263) is an N6-(pyridoxal phosphate)lysine.

Belongs to the class-III pyridoxal-phosphate-dependent aminotransferase family. HemL subfamily. Pyridoxal 5'-phosphate serves as cofactor.

It localises to the cytoplasm. It carries out the reaction (S)-4-amino-5-oxopentanoate = 5-aminolevulinate. It participates in porphyrin-containing compound metabolism; protoporphyrin-IX biosynthesis; 5-aminolevulinate from L-glutamyl-tRNA(Glu): step 2/2. The sequence is that of Glutamate-1-semialdehyde 2,1-aminomutase from Halorubrum lacusprofundi (strain ATCC 49239 / DSM 5036 / JCM 8891 / ACAM 34).